The sequence spans 134 residues: 16 kDa beta-galactoside-binding lectin (134 aa).

At Met1 the chain carries N-acetylmethionine. A Galectin domain is found at 4-134 (GLVVTQLDVQ…DFKVKAIKFS (131 aa)). 69 to 75 (WGEEDRK) contributes to the a beta-D-galactoside binding site.

As to quaternary structure, homodimer. In terms of tissue distribution, mainly in the liver (adult), mainly in the muscle (embryo).

In terms of biological role, this protein binds beta-galactoside. Its physiological function is not yet known. It may be involved in the regulation of differentiation. The sequence is that of 16 kDa beta-galactoside-binding lectin from Gallus gallus (Chicken).